Consider the following 140-residue polypeptide: MSTIRCDIVSAEKEIFHGEATLVVATGELGELGIAPKHAPLITRLKPGKVVVITANGEHLDFAISGGILEVQPQVVTILVDTAVRAQDIEEAAVRKVKEEAERLLANRGNTVDVAEAQRRLTEATVQLQALERLRRNLKH.

It belongs to the ATPase epsilon chain family. In terms of assembly, F-type ATPases have 2 components, CF(1) - the catalytic core - and CF(0) - the membrane proton channel. CF(1) has five subunits: alpha(3), beta(3), gamma(1), delta(1), epsilon(1). CF(0) has three main subunits: a, b and c.

It localises to the cell inner membrane. Produces ATP from ADP in the presence of a proton gradient across the membrane. This chain is ATP synthase epsilon chain, found in Xanthomonas oryzae pv. oryzae (strain PXO99A).